The primary structure comprises 226 residues: Lipoprotein-releasing system ATP-binding protein LolD (226 aa).

The ABC transporter domain maps to 6-226; sequence LKLDNIRRAF…KMSEGLLVEV (221 aa). An ATP-binding site is contributed by 42 to 49; sequence GPSGAGKS.

The protein belongs to the ABC transporter superfamily. Lipoprotein translocase (TC 3.A.1.125) family. The complex is composed of two ATP-binding proteins (LolD) and two transmembrane proteins (LolC and LolE).

Its subcellular location is the cell inner membrane. Functionally, part of the ABC transporter complex LolCDE involved in the translocation of mature outer membrane-directed lipoproteins, from the inner membrane to the periplasmic chaperone, LolA. Responsible for the formation of the LolA-lipoprotein complex in an ATP-dependent manner. This Paramagnetospirillum magneticum (strain ATCC 700264 / AMB-1) (Magnetospirillum magneticum) protein is Lipoprotein-releasing system ATP-binding protein LolD.